Reading from the N-terminus, the 778-residue chain is Endonuclease MutS2 (778 aa).

328-335 (GPNTGGKT) is a binding site for ATP. The Smr domain occupies 702–777 (LDLRGKRYEE…GSGATIVTFK (76 aa)).

The protein belongs to the DNA mismatch repair MutS family. MutS2 subfamily. Homodimer. Binds to stalled ribosomes, contacting rRNA.

Endonuclease that is involved in the suppression of homologous recombination and thus may have a key role in the control of bacterial genetic diversity. In terms of biological role, acts as a ribosome collision sensor, splitting the ribosome into its 2 subunits. Detects stalled/collided 70S ribosomes which it binds and splits by an ATP-hydrolysis driven conformational change. Acts upstream of the ribosome quality control system (RQC), a ribosome-associated complex that mediates the extraction of incompletely synthesized nascent chains from stalled ribosomes and their subsequent degradation. Probably generates substrates for RQC. This is Endonuclease MutS2 from Streptococcus pneumoniae serotype 19F (strain G54).